The chain runs to 513 residues: ATP synthase subunit beta (513 aa).

The tract at residues 1-29 (MATAPATEKKAPAKKAAAPKAAAPKKAAA) is disordered. Positions 14–29 (KKAAAPKAAAPKKAAA) are enriched in low complexity. 186 to 193 (GGAGVGKT) contacts ATP.

This sequence belongs to the ATPase alpha/beta chains family. In terms of assembly, F-type ATPases have 2 components, CF(1) - the catalytic core - and CF(0) - the membrane proton channel. CF(1) has five subunits: alpha(3), beta(3), gamma(1), delta(1), epsilon(1). CF(0) has three main subunits: a(1), b(2) and c(9-12). The alpha and beta chains form an alternating ring which encloses part of the gamma chain. CF(1) is attached to CF(0) by a central stalk formed by the gamma and epsilon chains, while a peripheral stalk is formed by the delta and b chains.

The protein resides in the cell inner membrane. It carries out the reaction ATP + H2O + 4 H(+)(in) = ADP + phosphate + 5 H(+)(out). Produces ATP from ADP in the presence of a proton gradient across the membrane. The catalytic sites are hosted primarily by the beta subunits. This Sphingopyxis alaskensis (strain DSM 13593 / LMG 18877 / RB2256) (Sphingomonas alaskensis) protein is ATP synthase subunit beta.